The chain runs to 315 residues: Probable serine acetyltransferase 4 (315 aa).

The interval 287-315 (AKPIIGKKAAPQRRPEELPGVTMEQRWSD) is disordered.

This sequence belongs to the transferase hexapeptide repeat family. In terms of assembly, homomultimer.

The enzyme catalyses L-serine + acetyl-CoA = O-acetyl-L-serine + CoA. The protein operates within amino-acid biosynthesis; L-cysteine biosynthesis; L-cysteine from L-serine: step 1/2. This Oryza sativa subsp. japonica (Rice) protein is Probable serine acetyltransferase 4 (SAT4).